Reading from the N-terminus, the 481-residue chain is MTVFIETQNFGTITRIIGPVLDITFTGNKMPKIYHALSIIDKNSEGLDIFIVCEVQQLLGDHCVRAISMNATDGLKRGMTVFDTGDVLKVPVGRSTLGRIFNVLGETIDNLGPADTSNQLPIHRSAPKFIDLDTKLSIFETGIKVVDLLAPYRRGGKIGLFGGAGVGKTVLIMELINNIAKTHGGVSVFGGVGERTREGNDLYMEMKESGIINEALISESKVALVYGQMNEPPGARMRVGLTALTMAEYFRDVSSQDVLLFIDNIFRFLQAGSEVSALLGRLPSAVGYQPTLASEMGALQERITSTKDGSITSIQAVYIPADDLTDPAPATTFAHLDATTVLSRGLASKGIYPAVDPLESTSTMLQPWIVGEEHYKCSQNVKQTLQRYKELQDIIAILGLDELSPDDRLIVARARKIERFLSQPFFVAELFTGLPGKYVSLAKTIQGFNLILSGDLDALSEQAFYLVGDIEEAISKGFLKK.

Position 162–169 (162–169 (GGAGVGKT)) interacts with ATP.

The protein belongs to the ATPase alpha/beta chains family. As to quaternary structure, F-type ATPases have 2 components, CF(1) - the catalytic core - and CF(0) - the membrane proton channel. CF(1) has five subunits: alpha(3), beta(3), gamma(1), delta(1), epsilon(1). CF(0) has four main subunits: a(1), b(1), b'(1) and c(9-12).

It localises to the plastid membrane. The catalysed reaction is ATP + H2O + 4 H(+)(in) = ADP + phosphate + 5 H(+)(out). Produces ATP from ADP in the presence of a proton gradient across the membrane. The catalytic sites are hosted primarily by the beta subunits. This Prototheca wickerhamii protein is ATP synthase subunit beta, plastid (atpB).